The sequence spans 207 residues: uncharacterized protein (207 aa).

This is an uncharacterized protein from Methanocaldococcus jannaschii (strain ATCC 43067 / DSM 2661 / JAL-1 / JCM 10045 / NBRC 100440) (Methanococcus jannaschii).